The chain runs to 709 residues: Ral guanine nucleotide dissociation stimulator-like 3 (709 aa).

The tract at residues valine 26 to aspartate 55 is disordered. The 138-residue stretch at lysine 64 to lysine 201 folds into the N-terminal Ras-GEF domain. Disordered regions lie at residues glutamate 203–serine 225, serine 395–proline 416, and proline 502–proline 604. The 256-residue stretch at serine 248–proline 503 folds into the Ras-GEF domain. Composition is skewed to low complexity over residues proline 502–proline 511 and serine 533–proline 551. 2 positions are modified to phosphoserine: serine 506 and serine 510. Over residues glycine 552–glutamine 576 the composition is skewed to pro residues. 5 positions are modified to phosphoserine: serine 553, serine 568, serine 572, serine 577, and serine 600. Residues serine 611–alanine 706 form an interaction with HRAS, MRAS and RIT1 region. Positions glutamate 612 to glycine 699 constitute a Ras-associating domain.

As to quaternary structure, interacts with GTP-bound forms of RIT1, HRAS and MRAS. In terms of tissue distribution, widely expressed. Expressed at high levels in the liver and kidney.

In terms of biological role, guanine nucleotide exchange factor (GEF) for Ral-A. Potential effector of GTPase HRas and Ras-related protein M-Ras. Negatively regulates Elk-1-dependent gene induction downstream of HRas and MEKK1. The polypeptide is Ral guanine nucleotide dissociation stimulator-like 3 (Rgl3) (Mus musculus (Mouse)).